The primary structure comprises 54 residues: MPQLNPGPWFAILVFSWLIFLTIIPTKILSHISPNEPTPVSAEKHKTESWDWPW.

A helical transmembrane segment spans residues 4–24 (LNPGPWFAILVFSWLIFLTII). The segment at 35–54 (NEPTPVSAEKHKTESWDWPW) is disordered. Over residues 42–54 (AEKHKTESWDWPW) the composition is skewed to basic and acidic residues.

Belongs to the ATPase protein 8 family. In terms of assembly, component of the ATP synthase complex composed at least of ATP5F1A/subunit alpha, ATP5F1B/subunit beta, ATP5MC1/subunit c (homooctomer), MT-ATP6/subunit a, MT-ATP8/subunit 8, ATP5ME/subunit e, ATP5MF/subunit f, ATP5MG/subunit g, ATP5MK/subunit k, ATP5MJ/subunit j, ATP5F1C/subunit gamma, ATP5F1D/subunit delta, ATP5F1E/subunit epsilon, ATP5PF/subunit F6, ATP5PB/subunit b, ATP5PD/subunit d, ATP5PO/subunit OSCP. ATP synthase complex consists of a soluble F(1) head domain (subunits alpha(3) and beta(3)) - the catalytic core - and a membrane F(0) domain - the membrane proton channel (subunits c, a, 8, e, f, g, k and j). These two domains are linked by a central stalk (subunits gamma, delta, and epsilon) rotating inside the F1 region and a stationary peripheral stalk (subunits F6, b, d, and OSCP).

The protein localises to the mitochondrion membrane. Subunit 8, of the mitochondrial membrane ATP synthase complex (F(1)F(0) ATP synthase or Complex V) that produces ATP from ADP in the presence of a proton gradient across the membrane which is generated by electron transport complexes of the respiratory chain. ATP synthase complex consist of a soluble F(1) head domain - the catalytic core - and a membrane F(1) domain - the membrane proton channel. These two domains are linked by a central stalk rotating inside the F(1) region and a stationary peripheral stalk. During catalysis, ATP synthesis in the catalytic domain of F(1) is coupled via a rotary mechanism of the central stalk subunits to proton translocation. In vivo, can only synthesize ATP although its ATP hydrolase activity can be activated artificially in vitro. Part of the complex F(0) domain. This Cyprinus carpio (Common carp) protein is ATP synthase F(0) complex subunit 8.